We begin with the raw amino-acid sequence, 766 residues long: Sucrose synthase (766 aa).

A GT-B glycosyltransferase region spans residues methionine 220–threonine 698.

Belongs to the glycosyltransferase 1 family. Plant sucrose synthase subfamily. In terms of tissue distribution, expressed most predominantly in tap root.

It catalyses the reaction an NDP-alpha-D-glucose + D-fructose = a ribonucleoside 5'-diphosphate + sucrose + H(+). In terms of biological role, sucrose-cleaving enzyme that provides UDP-glucose and fructose for various metabolic pathways. This chain is Sucrose synthase (SS1), found in Beta vulgaris (Sugar beet).